A 1524-amino-acid polypeptide reads, in one-letter code: DNA-directed RNA polymerase subunit beta' (1524 aa).

Zn(2+) contacts are provided by Cys58, Cys60, Cys73, and Cys76. Asp739, Asp741, and Asp743 together coordinate Mg(2+). Residues Cys1112, Cys1194, Cys1201, and Cys1204 each contribute to the Zn(2+) site. The disordered stretch occupies residues 1502 to 1524 (AVEAKEKEAPRRPVRREQPGKGL).

It belongs to the RNA polymerase beta' chain family. As to quaternary structure, the RNAP catalytic core consists of 2 alpha, 1 beta, 1 beta' and 1 omega subunit. When a sigma factor is associated with the core the holoenzyme is formed, which can initiate transcription. Mg(2+) is required as a cofactor. The cofactor is Zn(2+).

It carries out the reaction RNA(n) + a ribonucleoside 5'-triphosphate = RNA(n+1) + diphosphate. Its function is as follows. DNA-dependent RNA polymerase catalyzes the transcription of DNA into RNA using the four ribonucleoside triphosphates as substrates. The chain is DNA-directed RNA polymerase subunit beta' from Thermus aquaticus.